The primary structure comprises 686 residues: Protein-glutamine gamma-glutamyltransferase 2 (686 aa).

A2 bears the N-acetylalanine mark. 2 cysteine pairs are disulfide-bonded: C230–C370 and C370–C371. Catalysis depends on residues C277, H335, and D358. Ca(2+) contacts are provided by N398, D400, E437, E447, and E452. Residue K468 is modified to N6-acetyllysine. 476–483 contributes to the GTP binding site; it reads RIRVGDSM. E538 lines the Ca(2+) pocket. A GTP-binding site is contributed by 579 to 582; the sequence is RDLY. Q632 is covalently cross-linked (Isoglutamyl lysine isopeptide (Gln-Lys) (interchain with K-?)).

The protein belongs to the transglutaminase superfamily. Transglutaminase family. As to quaternary structure, monomer. Interacts with phospholipase C; promoting alpha-1 adrenergic receptor signaling. Interacts with PLCD1. Ca(2+) is required as a cofactor. In terms of processing, disulfide bond formation inactivates the calcium-dependent acyltransferase activity. Cys-370 can form disulfide bonds with both Cys-230 and Cys-371: formation of a disulfide bond between Cys-230 and Cys-370 facilitates formation of the disulfide between Cys-370 and Cys-371, which promotes inactivation of the acyltransferase activity. May also form interchain disulfids between Cys-230 and Cys-370. Ca(2+) protects against disulfide bond formation and inactivation. Post-translationally, auto-transglutaminated: Forms covalent cross-links mediated by transglutaminase between Gln-632 and the epsilon-amino group of a lysine residue of itself or HMGB1, forming homopolymers and heteropolymers, respectively. S-nitrosylated, leading to inactivation of the acyltransferase activity.

The protein resides in the cytoplasm. It is found in the cytosol. The protein localises to the nucleus. Its subcellular location is the chromosome. It localises to the secreted. The protein resides in the extracellular space. It is found in the extracellular matrix. The protein localises to the cell membrane. Its subcellular location is the mitochondrion. It catalyses the reaction L-glutaminyl-[protein] + L-lysyl-[protein] = [protein]-L-lysyl-N(6)-5-L-glutamyl-[protein] + NH4(+). The enzyme catalyses L-glutaminyl-[protein] + serotonin = 5-serotonyl-L-glutamyl-[protein] + NH4(+). It carries out the reaction L-glutaminyl-[protein] + dopamine = 5-dopaminyl-L-glutamyl-[protein] + NH4(+). The catalysed reaction is L-glutaminyl-[protein] + histamine = 5-histaminyl-L-glutamyl-[protein] + NH4(+). It catalyses the reaction L-glutaminyl-[protein] + (R)-noradrenaline = 5-(R)-noradrenalinyl-L-glutamyl-[protein] + NH4(+). The enzyme catalyses L-glutaminyl-[protein] + H2O = L-glutamyl-[protein] + NH4(+). With respect to regulation, acyltransferase activity is regulated by the binding of GTP and Ca(2+): inactivated by GTP, which stabilizes its closed structure, thereby obstructing the accessibility of substrates to the active sites. In contrast, Ca(2+) acts as a cofactor by inducing conformational change to the active open form. In absence of Ca(2+), Mg(2+) may bind Ca(2+)-binding sites, promoting GTP-binding and subsequent inhibition of the acyltransferase activity. Extracellularly reduced and activated by CLIC3. Its function is as follows. Calcium-dependent acyltransferase that catalyzes the formation of covalent bonds between peptide-bound glutamine and various primary amines, such as gamma-amino group of peptide-bound lysine, or mono- and polyamines, thereby producing cross-linked or aminated proteins, respectively. Involved in many biological processes, such as bone development, angiogenesis, wound healing, cellular differentiation, chromatin modification and apoptosis. Acts as a protein-glutamine gamma-glutamyltransferase by mediating the cross-linking of proteins, such as ACO2, HSPB6, FN1, HMGB1, RAP1GDS1, SLC25A4/ANT1, SPP1 and WDR54. Under physiological conditions, the protein cross-linking activity is inhibited by GTP; inhibition is relieved by Ca(2+) in response to various stresses. When secreted, catalyzes cross-linking of proteins of the extracellular matrix, such as FN1 and SPP1 resulting in the formation of scaffolds. Plays a key role during apoptosis, both by (1) promoting the cross-linking of cytoskeletal proteins resulting in condensation of the cytoplasm, and by (2) mediating cross-linking proteins of the extracellular matrix, resulting in the irreversible formation of scaffolds that stabilize the integrity of the dying cells before their clearance by phagocytosis, thereby preventing the leakage of harmful intracellular components. In addition to protein cross-linking, can use different monoamine substrates to catalyze a vast array of protein post-translational modifications: mediates aminylation of serotonin, dopamine, noradrenaline or histamine into glutamine residues of target proteins to generate protein serotonylation, dopaminylation, noradrenalinylation or histaminylation, respectively. Mediates protein serotonylation of small GTPases during activation and aggregation of platelets, leading to constitutive activation of these GTPases. Plays a key role in chromatin organization by mediating serotonylation and dopaminylation of histone H3. Catalyzes serotonylation of 'Gln-5' of histone H3 (H3Q5ser) during serotonergic neuron differentiation, thereby facilitating transcription. Acts as a mediator of neurotransmission-independent role of nuclear dopamine in ventral tegmental area (VTA) neurons: catalyzes dopaminylation of 'Gln-5' of histone H3 (H3Q5dop), thereby regulating relapse-related transcriptional plasticity in the reward system. Regulates vein remodeling by mediating serotonylation and subsequent inactivation of ATP2A2/SERCA2. Also acts as a protein deamidase by mediating the side chain deamidation of specific glutamine residues of proteins to glutamate. Catalyzes specific deamidation of protein gliadin, a component of wheat gluten in the diet. May also act as an isopeptidase cleaving the previously formed cross-links. Also able to participate in signaling pathways independently of its acyltransferase activity: acts as a signal transducer in alpha-1 adrenergic receptor-mediated stimulation of phospholipase C-delta (PLCD) activity and is required for coupling alpha-1 adrenergic agonists to the stimulation of phosphoinositide lipid metabolism. The protein is Protein-glutamine gamma-glutamyltransferase 2 of Mus musculus (Mouse).